A 140-amino-acid chain; its full sequence is UPF0251 protein Athe_2281 (140 aa).

Belongs to the UPF0251 family.

This Caldicellulosiruptor bescii (strain ATCC BAA-1888 / DSM 6725 / KCTC 15123 / Z-1320) (Anaerocellum thermophilum) protein is UPF0251 protein Athe_2281.